The sequence spans 226 residues: Cytidylate kinase (226 aa).

Residue 10–18 (GPASSGKST) coordinates ATP.

The protein belongs to the cytidylate kinase family. Type 1 subfamily.

The protein localises to the cytoplasm. It catalyses the reaction CMP + ATP = CDP + ADP. The enzyme catalyses dCMP + ATP = dCDP + ADP. This chain is Cytidylate kinase, found in Enterococcus faecalis (strain ATCC 700802 / V583).